Consider the following 448-residue polypeptide: Chromosomal replication initiator protein DnaA (448 aa).

Residues 1–72 (MPDLQELWNY…VEGAYEFAEI (72 aa)) are domain I, interacts with DnaA modulators. Positions 72–110 (IELTPIFVLPGESDNLTPLEPEEEHVLTKAETPTFLRET) are domain II. Residues 111–327 (HLNSKYTFDT…GALVRVQAYA (217 aa)) are domain III, AAA+ region. Positions 155, 157, 158, and 159 each coordinate ATP. The domain IV, binds dsDNA stretch occupies residues 328-448 (TMQNAEITTS…ILDLKNTMKS (121 aa)).

The protein belongs to the DnaA family. Oligomerizes as a right-handed, spiral filament on DNA at oriC.

Its subcellular location is the cytoplasm. Functionally, plays an essential role in the initiation and regulation of chromosomal replication. ATP-DnaA binds to the origin of replication (oriC) to initiate formation of the DNA replication initiation complex once per cell cycle. Binds the DnaA box (a 9 base pair repeat at the origin) and separates the double-stranded (ds)DNA. Forms a right-handed helical filament on oriC DNA; dsDNA binds to the exterior of the filament while single-stranded (ss)DNA is stabiized in the filament's interior. The ATP-DnaA-oriC complex binds and stabilizes one strand of the AT-rich DNA unwinding element (DUE), permitting loading of DNA polymerase. After initiation quickly degrades to an ADP-DnaA complex that is not apt for DNA replication. Binds acidic phospholipids. This is Chromosomal replication initiator protein DnaA from Latilactobacillus sakei subsp. sakei (strain 23K) (Lactobacillus sakei subsp. sakei).